The primary structure comprises 627 residues: Myelin-associated glycoprotein (627 aa).

The first 19 residues, 1-19 (MIFLATLPLFWIMISASRG), serve as a signal peptide directing secretion. Positions 20–325 (GHWGAWMPST…RTVELSVMYA (306 aa)) are interaction with RTN4R and RTN4RL2. Residues 20–516 (GHWGAWMPST…HRLMWAKIGP (497 aa)) lie on the Extracellular side of the membrane. A glycan (C-linked (Man) tryptophan) is linked at W22. The Ig-like V-type domain occupies 22–120 (WGAWMPSTIS…LGGKYYFRGD (99 aa)). 3 disulfides stabilise this stretch: C37–C165, C42–C100, and C159–C217. Residue 65–67 (YPK) coordinates a ganglioside GT1b (d18:1(4E)). N99 carries N-linked (GlcNAc...) asparagine glycosylation. Residues R118 and 124–128 (YNQYT) contribute to the a ganglioside GT1b (d18:1(4E)) site. Ig-like C2-type domains are found at residues 139–237 (NTPN…LDVK), 241–325 (VIVE…VMYA), 327–412 (WKPT…VEFA), and 413–508 (PIIL…GAHR). N-linked (GlcNAc...) asparagine glycosylation is found at N223 and N246. The cysteines at positions 261 and 305 are disulfide-linked. N-linked (GlcNAc...) asparagine glycosylation is found at N315 and N332. Cysteines 347 and 392 form a disulfide. A glycan (N-linked (GlcNAc...) asparagine) is linked at N406. 2 disulfide bridges follow: C421/C430 and C432/C488. N-linked (GlcNAc...) asparagine glycans are attached at residues N450 and N454. The helical transmembrane segment at 517-536 (VGAVVAFAILIAIVCYITQT) threads the bilayer. Residue C531 is the site of S-palmitoyl cysteine attachment. At 537 to 627 (RRKKNVTESS…LAEYAEIRVK (91 aa)) the chain is on the cytoplasmic side. Phosphoserine is present on residues S545, S547, S549, and S591. The tract at residues 578–627 (LGSERRLLGLRGESPELDLSYSHSDLGKRPTKDSYTLTEELAEYAEIRVK) is required for normal axon myelination in the central nervous system.

Belongs to the immunoglobulin superfamily. SIGLEC (sialic acid binding Ig-like lectin) family. As to quaternary structure, monomer and homodimer. Interacts (via the first three N-terminal Ig-like domains) with RTN4R and RTN4RL2. Interacts with isoform 2 of BSG. Post-translationally, N-glycosylated. In terms of processing, phosphorylated on tyrosine residues. Ubiquitinated, leading to proteasomal degradation. In terms of tissue distribution, detected in the myelin tract in brain, especially in the corpus callosum and in peripheral nerve. Expressed by myelinating glial cells in the central and peripheral nervous system. Detected in oligodendrocyte processes before formation of compact myelin. Restricted to the periaxonal space after myelination. Isoform S-MAG is the predominant isoform in CNS and PNS of the adult (at protein level).

The protein resides in the cell membrane. It localises to the membrane raft. In terms of biological role, adhesion molecule that mediates interactions between myelinating cells and neurons by binding to neuronal sialic acid-containing gangliosides and to the glycoproteins RTN4R and RTN4RL2. Not required for initial myelination, but seems to play a role in the maintenance of normal axon myelination. Protects motoneurons against apoptosis, also after injury; protection against apoptosis is probably mediated via interaction with neuronal RTN4R and RTN4RL2. Required to prevent degeneration of myelinated axons in adults; this probably depends on binding to gangliosides on the axon cell membrane. Negative regulator of neurite outgrowth that inhibits axon longitudinal growth. Negative regulator of neurite outgrowth; in dorsal root ganglion neurons the inhibition is mediated primarily via binding to neuronal RTN4R or RTN4RL2 and to a lesser degree via binding to neuronal gangliosides. In cerebellar granule cells the inhibition is mediated via binding to neuronal gangliosides. In sensory neurons, inhibition of neurite extension depends only partially on RTN4R, RTN4RL2 and gangliosides. Inhibits axon outgrowth by binding to RTN4R. Preferentially binds to alpha-2,3-linked sialic acid. Binds ganglioside Gt1b. This is Myelin-associated glycoprotein (Mag) from Mus musculus (Mouse).